The sequence spans 500 residues: Cytochrome P450 11B3, mitochondrial (500 aa).

A mitochondrion-targeting transit peptide spans 1–24 (MALRVTADVWLARPWQCLHRTRAL). C447 is a heme binding site.

Belongs to the cytochrome P450 family. The cofactor is heme. As to expression, expressed in the adrenal cortex and in different brain tissues, including hippocampus, hypothalamus, cerebellum, cerebral cortex, and midbrain.

It is found in the mitochondrion membrane. It carries out the reaction a steroid + 2 reduced [adrenodoxin] + O2 + 2 H(+) = an 11beta-hydroxysteroid + 2 oxidized [adrenodoxin] + H2O. The enzyme catalyses 21-hydroxyprogesterone + 2 reduced [adrenodoxin] + O2 + 2 H(+) = corticosterone + 2 oxidized [adrenodoxin] + H2O. It catalyses the reaction 21-hydroxyprogesterone + 2 reduced [adrenodoxin] + O2 + 2 H(+) = 18-hydroxy-11-deoxycorticosterone + 2 oxidized [adrenodoxin] + H2O. The catalysed reaction is 21-hydroxyprogesterone + 2 reduced [adrenodoxin] + O2 + 2 H(+) = 19-hydroxy-11-deoxycorticosterone + 2 oxidized [adrenodoxin] + H2O. In terms of biological role, a cytochrome P450 monooxygenase involved in the biosynthesis of adrenal corticoids. Catalyzes the hydroxylation of steroids at 11beta, 18- or 19-positions, with preferred regioselectivity at 11beta and 18. Converts 11-deoxycorticosterone into corticosterone, 18-hydroxy-11-deoxycorticosterone, and/or 19-hydroxy-11-deoxycorticosterone, but not to 18-hydroxycorticosterone or aldosterone. Mechanistically, uses molecular oxygen inserting one oxygen atom into a substrate for hydroxylation and reducing the second into a water molecule. Two electrons are provided by NADPH via a two-protein mitochondrial transfer system comprising flavoprotein FDXR (adrenodoxin/ferredoxin reductase) and nonheme iron-sulfur protein FDX1 or FDX2 (adrenodoxin/ferredoxin). The protein is Cytochrome P450 11B3, mitochondrial (Cyp11b3) of Rattus norvegicus (Rat).